The chain runs to 378 residues: Lipoyl synthase, mitochondrial (378 aa).

7 residues coordinate [4Fe-4S] cluster: Cys-97, Cys-102, Cys-108, Cys-128, Cys-132, Cys-135, and Ser-343. The 222-residue stretch at 111 to 332 folds into the Radical SAM core domain; the sequence is GSDKSAATAT…RQRALDMGFL (222 aa).

Belongs to the radical SAM superfamily. Lipoyl synthase family. [4Fe-4S] cluster serves as cofactor.

Its subcellular location is the mitochondrion. The catalysed reaction is [[Fe-S] cluster scaffold protein carrying a second [4Fe-4S](2+) cluster] + N(6)-octanoyl-L-lysyl-[protein] + 2 oxidized [2Fe-2S]-[ferredoxin] + 2 S-adenosyl-L-methionine + 4 H(+) = [[Fe-S] cluster scaffold protein] + N(6)-[(R)-dihydrolipoyl]-L-lysyl-[protein] + 4 Fe(3+) + 2 hydrogen sulfide + 2 5'-deoxyadenosine + 2 L-methionine + 2 reduced [2Fe-2S]-[ferredoxin]. It functions in the pathway protein modification; protein lipoylation via endogenous pathway; protein N(6)-(lipoyl)lysine from octanoyl-[acyl-carrier-protein]: step 2/2. Its function is as follows. Catalyzes the radical-mediated insertion of two sulfur atoms into the C-6 and C-8 positions of the octanoyl moiety bound to the lipoyl domains of lipoate-dependent enzymes, thereby converting the octanoylated domains into lipoylated derivatives. This Phaeosphaeria nodorum (strain SN15 / ATCC MYA-4574 / FGSC 10173) (Glume blotch fungus) protein is Lipoyl synthase, mitochondrial.